We begin with the raw amino-acid sequence, 920 residues long: 2-oxoadipate dehydrogenase complex component E1 (920 aa).

An N6-succinyllysine mark is found at Lys-183 and Lys-188. Positions 299-318 (GKTRGRQQSQEDGDYSPNGS) are disordered. Residues Lys-800 and Lys-818 each carry the N6-succinyllysine modification.

It belongs to the alpha-ketoglutarate dehydrogenase family. The 2-oxoadipate dehydrogenase complex is composed of OADH (2-oxoadipate dehydrogenase; E1a), DLST (dihydrolipoamide succinyltransferase; E2) and DLD (dihydrolipoamide dehydrogenase; E3). E1a functional unit is a dimer. Requires thiamine diphosphate as cofactor.

It is found in the mitochondrion. It catalyses the reaction N(6)-[(R)-lipoyl]-L-lysyl-[protein] + 2-oxoadipate + H(+) = N(6)-[(R)-S(8)-glutaryldihydrolipoyl]-L-lysyl-[protein] + CO2. It functions in the pathway amino-acid degradation. In terms of biological role, 2-oxoadipate dehydrogenase (E1a) component of the 2-oxoadipate dehydrogenase complex (OADHC). Participates in the first step, rate limiting for the overall conversion of 2-oxoadipate (alpha-ketoadipate) to glutaryl-CoA and CO(2) catalyzed by the whole OADHC. Catalyzes the irreversible decarboxylation of 2-oxoadipate via the thiamine diphosphate (ThDP) cofactor and subsequent transfer of the decarboxylated acyl intermediate on an oxidized dihydrolipoyl group that is covalently amidated to the E2 enzyme (dihydrolipoyllysine-residue succinyltransferase or DLST). Can catalyze the decarboxylation of 2-oxoglutarate in vitro, but at a much lower rate than 2-oxoadipate. Responsible for the last step of L-lysine, L-hydroxylysine and L-tryptophan catabolism with the common product being 2-oxoadipate. This chain is 2-oxoadipate dehydrogenase complex component E1 (Dhtkd1), found in Rattus norvegicus (Rat).